The chain runs to 419 residues: Tryptophan synthase beta chain (419 aa).

Lysine 86 carries the N6-(pyridoxal phosphate)lysine modification. Basic and acidic residues predominate over residues 394–403; it reads VEQQKVEQQK. Residues 394-419 are disordered; that stretch reads VEQQKVEQQKADNQNTEKNNQESGNE. Residues 404–419 are compositionally biased toward polar residues; it reads ADNQNTEKNNQESGNE.

It belongs to the TrpB family. In terms of assembly, tetramer of two alpha and two beta chains. The cofactor is pyridoxal 5'-phosphate.

It carries out the reaction (1S,2R)-1-C-(indol-3-yl)glycerol 3-phosphate + L-serine = D-glyceraldehyde 3-phosphate + L-tryptophan + H2O. It functions in the pathway amino-acid biosynthesis; L-tryptophan biosynthesis; L-tryptophan from chorismate: step 5/5. Functionally, the beta subunit is responsible for the synthesis of L-tryptophan from indole and L-serine. The protein is Tryptophan synthase beta chain of Shewanella halifaxensis (strain HAW-EB4).